The sequence spans 257 residues: OCIA domain-containing protein 1 (257 aa).

2 disordered regions span residues 1–20 (MDSPLNDGSHHPPPHAPHPL) and 148–257 (YSDE…SWTD). The OCIA domain occupies 1 to 110 (MDSPLNDGSH…MRLPNSHLGE (110 aa)). The segment covering 156 to 170 (GRSTSLNLDTESRPT) has biased composition (polar residues). The segment covering 204 to 216 (EDLRRRNREEYSK) has biased composition (basic and acidic residues).

Belongs to the OCIAD1 family. Interacts with STAT3 and ARF1. As to expression, expressed in all cells of the primary lymph gland lobe.

The protein resides in the endosome. In terms of biological role, maintains stem cell potency. Involved in endocytic pathways that mediate signaling during hematopoiesis. This Drosophila melanogaster (Fruit fly) protein is OCIA domain-containing protein 1 (asrij).